The sequence spans 69 residues: DNA gyrase inhibitor YacG (69 aa).

Cys7, Cys10, Cys26, and Cys30 together coordinate Zn(2+).

This sequence belongs to the DNA gyrase inhibitor YacG family. As to quaternary structure, interacts with GyrB. Zn(2+) serves as cofactor.

In terms of biological role, inhibits all the catalytic activities of DNA gyrase by preventing its interaction with DNA. Acts by binding directly to the C-terminal domain of GyrB, which probably disrupts DNA binding by the gyrase. In Shewanella baltica (strain OS195), this protein is DNA gyrase inhibitor YacG.